A 183-amino-acid chain; its full sequence is uncharacterized protein (183 aa).

The protein belongs to the asfivirus S183L family.

This is an uncharacterized protein from Ornithodoros (relapsing fever ticks).